A 1854-amino-acid polypeptide reads, in one-letter code: Calcium-channel protein cch1 (1854 aa).

The segment covering 1–15 (MSSSSNSDPSSSPDN) has biased composition (low complexity). The disordered stretch occupies residues 1-33 (MSSSSNSDPSSSPDNTDFIPLKDNPKDTSSYIN). Asparagine 40 is a glycosylation site (N-linked (GlcNAc...) asparagine). Transmembrane regions (helical) follow at residues 184-204 (HPLY…LLMI), 220-240 (IIVI…LFGF), and 274-294 (DFVA…QGIF). Residue asparagine 310 is glycosylated (N-linked (GlcNAc...) asparagine). Helical transmembrane passes span 328-348 (PLVQ…ILGV), 427-447 (FFNS…TDIM), 461-481 (LFII…IAVV), 514-534 (YLFY…VTLC), 549-569 (LIFY…RFFA), 581-601 (YTNL…LPSI), 606-626 (VAFG…ILLI), and 642-662 (QLLN…LCAV). A glycan (N-linked (GlcNAc...) asparagine) is linked at asparagine 699. A helical transmembrane segment spans residues 723–743 (FFTLWFLFSNNVVLSMFIAVI). N-linked (GlcNAc...) asparagine glycosylation occurs at asparagine 786. 3 helical membrane-spanning segments follow: residues 946–966 (VFIY…TPIY), 980–1000 (FVWT…IKII), and 1021–1041 (FFVL…HALL). A glycan (N-linked (GlcNAc...) asparagine) is linked at asparagine 1058. A run of 2 helical transmembrane segments spans residues 1075-1095 (FFKI…FALW) and 1148-1168 (FPHA…VDIM). Asparagine 1184 carries N-linked (GlcNAc...) asparagine glycosylation. A run of 4 helical transmembrane segments spans residues 1193–1213 (FVLF…AIII), 1274–1294 (FTGL…PCPI), 1302–1322 (SIFL…VYGL), and 1331–1351 (FWNM…IAIL). N-linked (GlcNAc...) asparagine glycosylation is present at asparagine 1356. 3 helical membrane-spanning segments follow: residues 1358 to 1378 (SLTL…IPKF), 1393 to 1413 (PSIF…AIAF), and 1486 to 1506 (FIAW…TVVF). 2 N-linked (GlcNAc...) asparagine glycosylation sites follow: asparagine 1508 and asparagine 1773. The tract at residues 1764–1792 (TIASGEGDDNHSVEDHLKVPTDNEPRRSP) is disordered. Over residues 1771-1790 (DDNHSVEDHLKVPTDNEPRR) the composition is skewed to basic and acidic residues.

The protein belongs to the calcium channel alpha-1 subunit (TC 1.A.1.11) family. In terms of assembly, interacts with yam8 to form a Ca(2+) influx channel.

The protein resides in the cell membrane. Functionally, voltage-gated, high-affinity calcium channel that functions together with yam8 to mediate calcium entry into cells. Required during conditions of environmental stress. This is Calcium-channel protein cch1 (cch1) from Schizosaccharomyces pombe (strain 972 / ATCC 24843) (Fission yeast).